The sequence spans 205 residues: Dr1-associated corepressor (205 aa).

A Histone-fold domain is found at 14–77 (PARIKKIMQT…SHLKQCIELE (64 aa)). The interval 91 to 205 (PDMQGDGEDN…EAEDEEDYDS (115 aa)) is disordered. Basic and acidic residues predominate over residues 98-108 (EDNHTDGDKGP). Residues 138 to 155 (SEQEDESEDTDTDGEEET) show a composition bias toward acidic residues. Residues 172-193 (PPTPFMPFTSPLPLPPAPPGPS) show a composition bias toward pro residues. The span at 196–205 (EAEDEEDYDS) shows a compositional bias: acidic residues.

The protein belongs to the NC2 alpha/DRAP1 family. As to quaternary structure, heterodimer with DR1. Binds BTAF1. Post-translationally, phosphorylation reduces DNA binding, but has no effect on heterodimerization and TBP binding.

It is found in the nucleus. Its function is as follows. The association of the DR1/DRAP1 heterodimer with TBP results in a functional repression of both activated and basal transcription of class II genes. This interaction precludes the formation of a transcription-competent complex by inhibiting the association of TFIIA and/or TFIIB with TBP. Can bind to DNA on its own. The sequence is that of Dr1-associated corepressor from Rattus norvegicus (Rat).